Here is a 119-residue protein sequence, read N- to C-terminus: Large ribosomal subunit protein bL20 (119 aa).

This sequence belongs to the bacterial ribosomal protein bL20 family.

Its function is as follows. Binds directly to 23S ribosomal RNA and is necessary for the in vitro assembly process of the 50S ribosomal subunit. It is not involved in the protein synthesizing functions of that subunit. The polypeptide is Large ribosomal subunit protein bL20 (Polaromonas sp. (strain JS666 / ATCC BAA-500)).